The following is a 376-amino-acid chain: Actin-related protein T1 (376 aa).

Belongs to the actin family. In skin, expressed in the basal, spinous and granular layers of the epidermis. Also expressed in hair follicles, sebaceaous glands, eccrine sweat glands and semen.

Its subcellular location is the cytoplasm. The protein localises to the cytoskeleton. It is found in the nucleus. The protein resides in the cytoplasmic vesicle. It localises to the secretory vesicle. Its subcellular location is the acrosome. Its function is as follows. Negatively regulates the Hedgehog (SHH) signaling. Binds to the promoter of the SHH signaling mediator, GLI1, and inhibits its expression. The polypeptide is Actin-related protein T1 (Homo sapiens (Human)).